Here is a 458-residue protein sequence, read N- to C-terminus: MSEPELKVSVSQLAPSDREGWLTKQGGSIRTWRRRWFVLKGKKLFYFKSKGDIEATGLIELEQNSFVKEEKDKDKKKKYMFTVGTSKRVFYIFAETETDMKQWMESIKRNLDGEGGMKSGGNDIVSSPKINSEPTPKVNQNGSAPEKSSLSSPRSKISNAKSIIPFLREEESKVLEFWQIWSESIPPQSDLQSGTAIEFHVATSIDMQKLTWRTAGPQNIFIQKMVDFFWNVGAPESEIDRLNDVGAIINPVKIGSWIDMSDKGGMDGGWYFPVDIPLKLAIEASDAGEPTRKLSEWAESNEVVNCYSIGRDMGAAPPRQTETRFKLPGPDFIAQLNLAVDAFKTFEFPPIPSNALEILYQSSNTLEAGGLCLSVITSSEGFVRLGLLIPKPTRDVVGQLCEIGQANRERISKFETALGGCGPAFVEFQYLQKGFGYTVYKEGFDIVFHYMVGEDQSE.

The PH domain maps to 15–112; the sequence is PSDREGWLTK…WMESIKRNLD (98 aa). Residues 111 to 154 are disordered; that stretch reads LDGEGGMKSGGNDIVSSPKINSEPTPKVNQNGSAPEKSSLSSPR. Polar residues predominate over residues 124 to 142; sequence IVSSPKINSEPTPKVNQNG. Residues 143–154 are compositionally biased toward low complexity; the sequence is SAPEKSSLSSPR.

This chain is PH domain-containing protein DDB_G0274775, found in Dictyostelium discoideum (Social amoeba).